Consider the following 285-residue polypeptide: Homeobox protein Hox-A4 (285 aa).

Disordered regions lie at residues 19–70 (PFEE…APRA) and 94–130 (ASPG…TTPA). Residues 27–41 (GGPGGGDGAVGGGPG) show a composition bias toward gly residues. Residues 44–70 (RPQSAPHLPAPNPHAARQPPAYYAPRA) are compositionally biased toward low complexity. Residues 106 to 118 (GAHPSPAPQPPVP) show a composition bias toward pro residues. Positions 159-164 (VYPWMK) match the Antp-type hexapeptide motif. The segment at residues 180–239 (PKRSRTAYTRQQVLELEKEFHFNRYLTRRRRIEIAHTLCLSERQVKIWFQNRRMKWKKDH) is a DNA-binding region (homeobox). Residues 238–285 (DHKLPNTKMRSSNTASAPAGPPGKAQTHSPHHHPHPLPGASTPIPSSI) form a disordered region.

It belongs to the Antp homeobox family. Deformed subfamily.

The protein localises to the nucleus. Its function is as follows. Sequence-specific transcription factor which is part of a developmental regulatory system that provides cells with specific positional identities on the anterior-posterior axis. Binds to sites in the 5'-flanking sequence of its coding region with various affinities. The consensus sequences of the high and low affinity binding sites are 5'-TAATGA[CG]-3' and 5'-CTAATTTT-3'. This chain is Homeobox protein Hox-A4 (Hoxa4), found in Mus musculus (Mouse).